A 242-amino-acid chain; its full sequence is DNA repair protein RecO (242 aa).

Belongs to the RecO family. Monomer.

In terms of biological role, involved in DNA repair and RecF pathway recombination. In Shigella flexneri, this protein is DNA repair protein RecO.